A 409-amino-acid chain; its full sequence is Tyrosine--tRNA ligase (409 aa).

The 'HIGH' region signature appears at 54–63 (PTAPDIHLGH). The 'KMSKS' region signature appears at 238–242 (KMSKS). Position 241 (Lys241) interacts with ATP. The S4 RNA-binding domain maps to 347 to 407 (QGILRILREA…GKRKFARVKL (61 aa)).

This sequence belongs to the class-I aminoacyl-tRNA synthetase family. TyrS type 2 subfamily. Homodimer.

The protein resides in the cytoplasm. The catalysed reaction is tRNA(Tyr) + L-tyrosine + ATP = L-tyrosyl-tRNA(Tyr) + AMP + diphosphate + H(+). Functionally, catalyzes the attachment of tyrosine to tRNA(Tyr) in a two-step reaction: tyrosine is first activated by ATP to form Tyr-AMP and then transferred to the acceptor end of tRNA(Tyr). The protein is Tyrosine--tRNA ligase of Bordetella bronchiseptica (strain ATCC BAA-588 / NCTC 13252 / RB50) (Alcaligenes bronchisepticus).